Consider the following 29-residue polypeptide: Cytochrome b6-f complex subunit 8 (29 aa).

Residues 3 to 23 traverse the membrane as a helical segment; sequence TVSIAWAALMVIFTFSISLVV.

It belongs to the PetN family. As to quaternary structure, the 4 large subunits of the cytochrome b6-f complex are cytochrome b6, subunit IV (17 kDa polypeptide, PetD), cytochrome f and the Rieske protein, while the 4 small subunits are PetG, PetL, PetM and PetN. The complex functions as a dimer.

The protein resides in the plastid. The protein localises to the chloroplast thylakoid membrane. Its function is as follows. Component of the cytochrome b6-f complex, which mediates electron transfer between photosystem II (PSII) and photosystem I (PSI), cyclic electron flow around PSI, and state transitions. In Psilotum nudum (Whisk fern), this protein is Cytochrome b6-f complex subunit 8.